A 95-amino-acid polypeptide reads, in one-letter code: Large ribosomal subunit protein uL23 (95 aa).

It belongs to the universal ribosomal protein uL23 family. Part of the 50S ribosomal subunit. Contacts protein L29, and trigger factor when it is bound to the ribosome.

Its function is as follows. One of the early assembly proteins it binds 23S rRNA. One of the proteins that surrounds the polypeptide exit tunnel on the outside of the ribosome. Forms the main docking site for trigger factor binding to the ribosome. The polypeptide is Large ribosomal subunit protein uL23 (Syntrophotalea carbinolica (strain DSM 2380 / NBRC 103641 / GraBd1) (Pelobacter carbinolicus)).